We begin with the raw amino-acid sequence, 162 residues long: Ubiquitin D (162 aa).

2 Ubiquitin-like domains span residues 3–78 (SVRT…LKVV) and 87–160 (LFLV…THCT).

It belongs to the ubiquitin D family. As to quaternary structure, interacts directly with the 26S proteasome. Interacts with NUB1; this interaction facilitates the linking of UBD-conjugated target protein to the proteasome complex and accelerates its own degradation and that of its conjugates. Interacts (via ubiquitin-like 1 domain) with the spindle checkpoint protein MAD2L1 during mitosis. Present in aggresomes of proteasome inhibited cells. Interacts with HDAC6 under proteasome impairment conditions. Forms a thioester with UBA6 in cells stimulated with tumor necrosis factor-alpha (TNFa) and interferon-gamma (IFNg). Interacts with SQSTM1 and TP53/p53. Post-translationally, can be acetylated. In terms of tissue distribution, mostly expressed in thymus and intestine.

Its subcellular location is the nucleus. It is found in the cytoplasm. In terms of biological role, ubiquitin-like protein modifier which can be covalently attached to target proteins and subsequently leads to their degradation by the 26S proteasome, in a NUB1-dependent manner. Conjugation to the target protein is activated by UBA6 via adenylation of its C-terminal glycine. Probably functions as a survival factor. Promotes the expression of the proteasome subunit beta type-9 (PSMB9/LMP2). Regulates TNF-alpha-induced and LPS-mediated activation of the central mediator of innate immunity NF-kappa-B by promoting TNF-alpha-mediated proteasomal degradation of ubiquitinated-I-kappa-B-alpha. Required for TNF-alpha-induced p65 nuclear translocation in renal tubular epithelial cells (RTECs). May be involved in dendritic cell (DC) maturation, the process by which immature dendritic cells differentiate into fully competent antigen-presenting cells that initiate T-cell responses. Mediates mitotic non-disjunction and chromosome instability, in long-term in vitro culture and cancers, by abbreviating mitotic phase and impairing the kinetochore localization of MAD2L1 during the prometaphase stage of the cell cycle. May be involved in the formation of aggresomes when proteasome is saturated or impaired. Mediates apoptosis in a caspase-dependent manner, especially in renal epithelium and tubular cells during renal diseases. In Mus musculus (Mouse), this protein is Ubiquitin D (Ubd).